The chain runs to 173 residues: Insertion element IS1397 uncharacterized 20.1 kDa protein (173 aa).

Residues 115–135 (KSMTRSDDTHENEANMTPEEM) are disordered.

The protein belongs to the IS150/IS1296 orfA family.

This Escherichia coli protein is Insertion element IS1397 uncharacterized 20.1 kDa protein.